Consider the following 442-residue polypeptide: MNYTIKDILKLEVAPALGCTEPTAIALGAAAAATLLFPGKAIETIEVWLDPNLFKNGLAVSIPRTHGRSGLDLAAALGALAGDAHLKMEVLTPITDKDVDAALALVAGKQVKVRLLDRHRGLLVRTRIKAGDQIAESVIEQLHDNITSLCLNGEQIETTDLFPRSLEGGKNQTSALELWLRGITMETMIAMIDDLDGSDLEFLQTGIDMNMALARHGLENAVGLGVGTTLEALAQKGLVARDMIHRARVLTAAAADARMSGAPLPAMSSAGSGNHGLTAILPVKAVADHLKSDRKDLCRAVGLSHVVTAFVKAHTGRLAAICACSVAAGAGATAAITWLLGGTPGQIGGAVENIIEDLAGVICDGAKNSCALKLDTAAARAVQAALFAMNGLTVKVTDGIVGGSAEETIRNMGILSSQGMIETDKTILKIMMDKLINSRSEQ.

Belongs to the UPF0597 family.

This Desulforapulum autotrophicum (strain ATCC 43914 / DSM 3382 / VKM B-1955 / HRM2) (Desulfobacterium autotrophicum) protein is UPF0597 protein HRM2_02820.